The following is a 283-amino-acid chain: Nucleotide-binding protein ABBFA_002973 (283 aa).

9–16 (GQSGSGKS) is a binding site for ATP. GTP is bound at residue 59–62 (DVRS).

Belongs to the RapZ-like family.

Its function is as follows. Displays ATPase and GTPase activities. In Acinetobacter baumannii (strain AB307-0294), this protein is Nucleotide-binding protein ABBFA_002973.